The following is a 123-amino-acid chain: Translation initiation factor 1A (123 aa).

Positions 1-11 (MSPDKTEDEDK) are enriched in acidic residues. A disordered region spans residues 1–26 (MSPDKTEDEDKDVNVDQDQFNEEEES). The region spanning 28–102 (GRVILPNKKK…EKADVVYRYT (75 aa)) is the S1-like domain.

Belongs to the eIF-1A family.

Its function is as follows. Seems to be required for maximal rate of protein biosynthesis. Enhances ribosome dissociation into subunits and stabilizes the binding of the initiator Met-tRNA(I) to 40 S ribosomal subunits. The chain is Translation initiation factor 1A (eIF1A) from Thermoplasma volcanium (strain ATCC 51530 / DSM 4299 / JCM 9571 / NBRC 15438 / GSS1).